We begin with the raw amino-acid sequence, 7180 residues long: MAKMGKYGLGFKWAPEFPWMLPNASEKLGNPERSEEDGFCPSAAQEPKVKGKTLVNHVRVDCSRLPALECCVQSAIIRDIFVDEDPQKVEASTMMALQFGSAVLVKPSKRLSVQAWAKLGVLPKTPAMGLFKRFCLCNTRECVCDAHVAFQLFTVQPDGVCLGNGRFIGWFVPVTAIPEYAKQWLQPWSILLRKGGNKGSVTSGHFRRAVTMPVYDFNVEDACEEVHLNPRGKYSCKAYALLRGYRGVKPILFVDQYGCDYTGCLAKGLEDYGDLTLSEMKELSPVWRDSLDNEVVVAWHVDRDPRAVMRLQTLATVRSIEYVGQPIEDMVDGDVVMREPAHLLAPNAIVKRLPRLVETMLYTDSSVTEFCYKTKLCDCGFITQFGYVDCCGDTCGFRGWVPGNMMDGFPCPGCCKSYMPWELEAQSSGVIPEGGVLFTQSTDTVNRESFKLYGHAVVPFGGAAYWSPYPGMWLPVIWSSVKSYSYLTYTGVVGCKAIVQETDAICRFLYMDYVQHKCGNLEQRAILGLDDVYHRQLLVNRGDYSLLLENVDLFVKRRAEFACKFATCGDGLVPLLLDGLVPRSYYLIKSGQAFTSLMVNFSREVVDMCMDMALLFMHDVKVATKYVKKVTGKVAVRFKALGIAVVRKITEWFDLAVDTAASAAGWLCYQLVNGLFAVANGVITFIQEVPELVKNFVDKFKTFFKVLIDSMSVSILSGLTVVKTASNRVCLAGSKVYEVVQKSLPAYIMPVGCSEATCLVGEIEPAVFEDDVVDVVKAPLTYQGCCKPPSSFEKICIVDKLYMAKCGDQFYPVVVDNDTVGVLDQCWRFPCAGKKVVFNDKPKVKEVPSTRKIKIIFALDATFDSVLSKACSEFEVDKDVTLDELLDVVLDAVESTLSPCKEHGVIGTKVCALLERLVDDYVYLFDEGGEEVIASRMYCSFSAPDEDCVATDVVYADENQDDDADDPVVLVADTQEEDGVAREQVDSADSEICVAHTGGQEMTEPDVVGSQTPIASAEETEVGEACDREGIAEVKATVCADALDACPDQVEAFDIEKVEDSILSELQTELNAPADKTYEDVLAFDAIYSETLSAFYAVPSDETHFKVCGFYSPAIERTNCWLRSTLIVMQSLPLEFKDLGMQKLWLSYKAGYDQCFVDKLVKSAPKSIILPQGGYVADFAYFFLSQCSFKVHANWRCLKCGMELKLQGLDAVFFYGDVVSHMCKCGNSMTLLSADIPYTFDFGVRDDKFCAFYTPRKVFRAACAVDVNDCHSMAVVDGKQIDGKVVTKFNGDKFDFMVGHGMTFSMSPFEIAQLYGSCITPNVCFVKGDVIKVLRRVGAEVIVNPANGRMAHGAGVAGAIAKAAGKAFINETADMVKAQGVCQVGGCYESTGGKLCKKVLNIVGPDARGHGNECYSLLERAYQHINKCDNVVTTLISAGIFSVPTDVSLTYLLGVVTKNVILVSNNQDDFDVIEKCQVTSVAGTKALSFQLAKNLCRDVKFVTNACSSLFSESSFVSSYDVLQEVEALRHDIQLDDDARVFVQANMDCLPTDWRLVNKFDSVDGVRTIKYFECPGEVFVSSQGKKFGYVQNGSFKEASVSQIRALLANKVDVLCTVDGVNFRSCCVAEGEVFGKTLGSVFCDGINVTKVRCSAIHKGKVFFQYSGLSAADLAAVKDAFGFDEPQLLQYYSMLGMCKWPVVVCGNYFAFKQSNNNCYINVACLMLQHLSLKFPKWQWRRPGNEFRSGKPLRFVSLVLAKGSFKFNEPSDSTDFIRVELREADLSGATCDLEFICKCGVKQEQRKGVDAVMHFGTLDKSGLVKGYNIACTCGDKLVHCTQFNVPFLICSNTPEGKKLPDDVVAANIFTGGSVGHYTHVKCKPKYQLYDACNVSKVSEAKGNFTDCLYLKNLKQTFSSVLTTYYLDDVKCVAYKPDLSQYYCESGKYYTKPIIKAQFRTFEKVEGVYTNFKLVGHDIAEKLNAKLGFDCNSPFMEYKITEWPTATGDVVLASDDLYVSRYSGGCVTFGKPVIWRGHEEASLKSLTYFNRPSVVCENKFNVLPVDVSEPTDRRPVPSAVLVTGAASGADASAISTEPGTAKEQKACASDSVEDQIVMEAQKKSSVTTVAVKEVKLNGVKKPVKWNCSVVVNDPTSETKVVKSLSIVDVYDMFLTGCRYVVWTANELSRLINSPTVREYVKWGMSKLIIPANLLLLRDEKQEFVAPKVVKAKAIACYGAVKWFLLYCFSWIKFNTDNKVIYTTEVASKLTFKLCCLAFKNALQTFNWSVVSRGFFLVATVFLLWFNFLYANVILSDFYLPNIGPLPMFVGQIVAWVKTTFGVLTICDFYQVTDLGYRSSFCNGSMVCELCFSGFDMLDNYESINVVQHVVDRRVSFDYISLFKLVVELVIGYSLYTVCFYPLFVLVGMQLLTTWLPEFFMLGTMHWSARLFVFVANMLPAFTLLRFYIVVTAMYKVYCLCRHVMYGCSKPGCLFCYKRNRSVRVKCSTVVGGSLRYYDVMANGGTGFCTKHQWNCLNCNSWKPGNTFITHEAAADLSKELKRPVNPTDSAYYSVIEVKQVGCSMRLFYERDGQRVYDDVSASLFVDMNGLLHSKVKGVPETHVVVVENEADKAGFLNAAVFYAQSLYRPMLMVEKKLITTANTGLSVSRTMFDLYVYSLLRHLDVDRKSLTSFVNAAHNSLKEGVQLEQVMDTFVGCARRKCAIDSDVETKSITKSVMAAVNAGVEVTDESCNNLVPTYVKSDTIVAADLGVLIQNNAKHVQSNVAKAANVACIWSVDAFNQLSADLQHRLRKACVKTGLKIKLTYNKQEANVPILTTPFSLKGGAVFSRVLQWLFVANLICFIVLWALMPTYAVHKSDMQLPLYASFKVIDNGVLRDVSVTDACFANKFNQFDQWYESTFGLVYYRNSKACPVVVAVIDQDIGHTLFNVPTKVLRYGFHVLHFITHAFATDRVQCYTPHMQIPYDNFYASGCVLSSLCTMLAHADGTPHPYCYTEGVMHNASLYSSLVPHVRYNLASSNGYIRFPEVVSEGIVRVVRTRSMTYCRVGLCEEAEEGICFNFNSSWVLNNPYYRAMPGTFCGRNAFDLIHQVLGGLVQPIDFFALTASSVAGAILAIIVVLAFYYLIKLKRAFGDYTSVVVINVIVWCINFLMLFVFQVYPTLSCLYACFYFYTTLYFPSEISVVMHLQWLVMYGAIMPLWFCITYVAVVVSNHALWLFSYCRKIGTDVRSDGTFEEMALTTFMITKESYCKLKNSVSDVAFNRYLSLYNKYRYFSGKMDTATYREAACSQLAKAMETFNHNNGNDVLYQPPTASVTTSFLQSGIVKMVSPTSKVEPCVVSVTYGNMTLNGLWLDDKVYCPRHVICSSADMTDPDYPNLLCRVTSSDFCVMSDRMSLTVMSYQMQGSLLVLTVTLQNPNTPKYSFGVVKPGETFTVLAAYNGRPQGAFHVVMRSSHTIKGSFLCGSCGSVGYVLTGDSVRFVYMHQLELSTGCHTGTDFSGNFYGPYRDAQVVQLPVQDYTQTVNVVAWLYAAILNRCNWFVQSDSCSLEEFNVWAMTNGFSSIKADLVLDALASMTGVTVEQVLAAIKRLHSGFQGKQILGSCVLEDELTPSDVYQQLAGVKLQSKRTRVIKGTCCWILASTFLFCSIISAFVKWTMFMYVTTHMLGVTLCALCFVIFAMLLIKHKHLYLTMYIMPVLCTLFYTNYLVVGYKQSFRGLAYAWLSYFVPAVDYTYMDEVLYGVVLLVAMVFVTMRSINHDVFSTMFLVGRLVSLVSMWYFGANLEEEVLLFLTSLFGTYTWTTMLSLATAKVIAKWLAVNVLYFTDIPQIKLVLLSYLCIGYVCCCYWGVLSLLNSIFRMPLGVYNYKISVQELRYMNANGLRPPRNSFEALMLNFKLLGIGGVPVIEVSQIQSRLTDVKCANVVLLNCLQHLHIASNSKLWQYCSTLHNEILATSDLSVAFDKLAQLLVVLFANPAAVDSKCLASIEEVSDDYVRDNTVLQALQSEFVNMASFVEYELAKKNLDEAKASGSANQQQIKQLEKACNIAKSAYERDRAVARKLERMADLALTNMYKEARINDKKSKVVSALQTMLFSMVRKLDNQALNSILDNAVKGCVPLNAIPPLTSNTLTIIVPDKQVFDQVVDNVYVTYAPNVWHIQSIQDADGAVKQLNEIDVNSTWPLVISANRHNEVSTVVLQNNELMPQKLRTQVVNSGSDMNCNIPTQCYYNTTGTGKIVYAILSDCDGLKYTKIVKEDGNCVVLELDPPCKFSVQDVKGLKIKYLYFVKGCNTLARGWVVGTLSSTVRLQAGTATEYASNSAILSLCAFSVDPKKTYLDYIQQGGVPVTNCVKMLCDHAGTGMAITIKPEATTNQDSYGGASVCIYCRSRVEHPDVDGLCKLRGKFVQVPLGIKDPVSYVLTHDVCQVCGFWRDGSCSCVGTGSQFQSKDTNFLNRVRGTSVNARLVPCASGLDTDVQLRAFDICNANRAGIGLYYKVNCFRFQRVDEEGNKLDKFFVVKRTNLEVYNKEKECYELTKDCGVVAEHEFFTFDVEGSRVPHIVRKDLSKFTMLDLCYALRHFDRNDCSTLKEILLTYAECDESYFQKKDWYDFVENPDIINVYKKLGPIFNRALLNTANFADTLVEAGLVGVLTLDNQDLYGQWYDFGDFVKTVPCCGVAVADSYYSYMMPMLTMCHALDSELFVNGTYREFDLVQYDFTDFKLELFNKYFKHWSMTYHPNTSECEDDRCIIHCANFNILFSMVLPKTCFGPLVRQIFVDGVPFVVSIGYHYKELGVVMNMDVDTHRYRLSLKDLLLYAADPALHVASASALLDLRTCCFSVAAITSGVKFQTVKPGNFNQDFYEFILSKGLLKEGSSVDLKHFFFTQDGNAAITDYNYYKYNLPTMVDIKQLLFVVEVVNKYFEIYEGGCIPATQVIVNNYDKSAGYPFNKFGKARLYYEALSFEEQDEIYAYTKRNVLPTLTQMNLKYAISAKNRARTVAGVSILSTMTGRMFHQKCLKSIAATRGVPVVIGTTKFYGGWDDMLRRLIKDVDSPVLMGWDYPKCDRAMPNILRIVSSLVLARKHDSCCSHTDRFYRLANECAQVLGEIVMCGGCYYVKPGGTSSGDATTAFANSVFNICQAVSANVCSLMACNGHKIEDLSIRELQKRLYSNVYRADHVDPAFVSEYYEFLNKHFSMIILSDDGVVCYNSEFASKGYIANISDFQQVLYYQNNVFMSEAKCWVETDIEKGPHEFCSQHTMLVKMDGDEVYLPYPDPSRILGAGCFVDDLLKTDSVLLIERFVSLAIDAYPLVYHENPEYQNVFRVYLEYIKKLYNDLGNQILDSISVILSTCDGQKFTDETFYKNMYLRSAVMQSVGACVVCSSQTSLRCGSCIRKPLLCCKCAYDHVMSTDHKYVLSVSPYVCNSPGCDVNDVTKLYLGGMSYYCEAHKPQYSFKLVMNGMVFGLYKQSCTGSPYIEDFNKIASCKWTEVDDYVLANECTERLKLFAAETQKATEEAFKQCYASATIREIVSDRELILSWEIGKVRPPLNKNYVFTGYHFTNNGKTVLGEYVFDKSELTNGVYYRATTTYKLSVGDVFILTSHAVSSLSAPTLVPQENYTSVRFASAYSVPETFQNNVPNYQHIGIKRYCTVQGPPGTGKSHLAIGHAVYYCTARVVYTAASHAAVDALCEKAHKFLNINDCARIVPAKLRVDCYDKFNVNDTTRKYVFTTINALPELVTDIIVVDEVSMLTNYELSVINSRVRAKHYVYIGDPAQLPAPRVLLNKGTLEPRYFNSVTKLMCCLGPDIFLGTCYRCPKEIVDTVSALVYNNKLKAKNDNSAMCFKVYYKGQTTHESSSAVNMQQIHLISKLLKANPSWSNAVFISPYNSQNYVAKRVLGLQTQTADSAQGSAYDFVIYSQTAQTAHSVNVNRFNVAITRAKKGILCVMSSMQLIGVFNFTTLTLDKINNPRLQCTTNLFKDCSKSYVGIPPCAFLLAVDDKYKVSGNLAVCLNVADSAVTYSRLISLMGFKLDLTLDGYCKLFITRDEAIKRVRAWVGFDAEGAHATRDSIGTNFPLQLGFSTGIDFVVEATGMFAERDGYVFKKAAARAPPGEQFKHLVPLMSRGQKWDVVRIRIVQMLSDHLVDLADSVVLVTWAASFELTCLRYFAKVGKEVVCSVCNKRATCFNSRTGYYGCWRHSYSCDYLYNPLIVDIQQWGYTGSLTSNHDPICSVHKGAHVASSDAIMTRCLAVHDCFCKSVNWNLEYPIISNEVSVNTSCRLLQRVMFRAAMLCNRYDVCYDIGNPKGLACVKGYDFKFYDASPVVKSVKQFVYKYEAHKDQFLDGLCMFWNCNVDKYPANAVVCRFDTRVLSKLNLPGCNGGSLYVNKHAFHTNPFTRAAFENLKPMPFFYYSDTPCVYMEGMESKQVDYVPLRSATCITRCNLGGAVCLKHAEEYREYLESYNTATTAGFTFWVYKTFDFYNLWNTFTRLQSLENVVYNLVNAGHFDGRAGELPCAVIGEKVIAKIQNEDVVVFKNNTPFPTNVAVELFAERSIRPHPELKLFRSSNIHVCWNHVLWDYAKDSVFCSSTYKVCKYTDLQCIESLNVLFDGRDNGALEAFKKCRNGVYINTTKIKSLSMIKGPQRADLNGVVVEKVGDSDVEFWFAMRRDGDDVIFSRTGSLEPSHYRSPQGNPGGNRVGDLSGNEALARGTIFTQSRFLSSFSPRSEMEKDFMDLDEDVFIAKYSLQDYAFEHVVYGSFNQKIIGGLHLLIGLARRPKKSNLVIQEFVPYDSSIHSYFITDENSGSSESVCTVIDLLLDDFVDIVKSLNLKCVSKVVNVNVDFKDFQFMLWCNEEKVMTFYPRLQAAADWKPGYVMPVLYKYLESPMERVNLWNYGKPITLPTGCMMNVAKYTQLCQYLSTTTLAVPANMRVLHLGAGSDKGVAPGSAVLRQWLPSGSILVDNDMNPFVSDSVASYYGNCITLPFDCQWDLIISDMYDPLTKNIGEYNVSKDGFFTYLCHLIRDKLALGGSVAIKITEFSWNAELYSLMGKFAFWTIFCTNVNASSSEGFLIGINWLNRTRNEIDGKTMHANYLFWRNSTMWNGGAYSLFDMTKFPLKAAGTAVVSLKPDQINDLVLSLIEKGKLLVRDTRKEVFVGDSLVNVK.

The CoV Nsp1 globular domain occupies 54-196 (LVNHVRVDCS…PWSILLRKGG (143 aa)). The 31-residue stretch at 217–247 (FNVEDACEEVHLNPRGKYSCKAYALLRGYRG) folds into the BetaCoV Nsp1 C-terminal domain. In terms of domain architecture, CoV Nsp2 N-terminal spans 251-513 (ILFVDQYGCD…AICRFLYMDY (263 aa)). 4 residues coordinate Zn(2+): C390, C395, C411, and C414. Positions 390 to 414 (CCGDTCGFRGWVPGNMMDGFPCPGC) are C4. The CoV Nsp2 middle domain maps to 518–706 (CGNLEQRAIL…VDKFKTFFKV (189 aa)). The CoV Nsp2 C-terminal domain maps to 726 to 832 (SNRVCLAGSK…LDQCWRFPCA (107 aa)). The region spanning 834–946 (KKVVFNDKPK…MYCSFSAPDE (113 aa)) is the Ubiquitin-like 1 domain. One can recognise a Peptidase C16 1 domain in the interval 1083 to 1320 (AFDAIYSETL…IAQLYGSCIT (238 aa)). Residue C1120 is the For PL1-PRO activity of the active site. 4 residues coordinate Zn(2+): C1197, C1200, C1223, and C1225. The C4-type 1 zinc finger occupies 1197–1225 (CLKCGMELKLQGLDAVFFYGDVVSHMCKC). Catalysis depends on for PL1-PRO activity residues H1271 and D1282. The Macro domain maps to 1321 to 1481 (PNVCFVKGDV…VIEKCQVTSV (161 aa)). A DPUP domain is found at 1536–1608 (DDARVFVQAN…VSQIRALLAN (73 aa)). Positions 1607 to 1662 (ANKVDVLCTVDGVNFRSCCVAEGEVFGKTLGSVFCDGINVTKVRCSAIHKGKVFFQ) constitute a Ubiquitin-like 2 domain. Residues 1677–1936 (AFGFDEPQLL…CVAYKPDLSQ (260 aa)) form the Peptidase C16 2 domain. The active-site For PL2-PRO activity is the C1715. Zn(2+)-binding residues include C1793, C1795, C1827, and C1829. The C4-type 2 zinc finger occupies 1793-1829 (CKCGVKQEQRKGVDAVMHFGTLDKSGLVKGYNIACTC). Active-site for PL2-PRO activity residues include H1872 and D1886. The region spanning 1950 to 2051 (IKAQFRTFEK…TYFNRPSVVC (102 aa)) is the Nucleic acid-binding domain. Residues 2106–2259 (SVEDQIVMEA…TDNKVIYTTE (154 aa)) form the G2M domain. A run of 3 helical transmembrane segments spans residues 2228-2248 (AIAC…WIKF), 2289-2309 (FFLV…NVIL), and 2320-2340 (LPMF…VLTI). Positions 2228-2465 (AIACYGAVKW…FTLLRFYIVV (238 aa)) are HD1. The 62-residue stretch at 2325-2386 (GQIVAWVKTT…SINVVQHVVD (62 aa)) folds into the 3Ecto domain. Intrachain disulfides connect C2341–C2365 and C2356–C2362. Helical transmembrane passes span 2403 to 2423 (LVIG…LVGM) and 2445 to 2465 (LFVF…YIVV). A Y1 region spans residues 2473–2563 (CLCRHVMYGC…ELKRPVNPTD (91 aa)). Residues 2473–2840 (CLCRHVMYGC…LTTPFSLKGG (368 aa)) form the CoV Nsp3 Y domain. Zn(2+) is bound by residues H2477, C2482, C2487, C2490, C2523, H2526, C2530, and C2533. Residues 2477 to 2490 (HVMYGCSKPGCLFC) form a ZF1 region. The interval 2523 to 2533 (CTKHQWNCLNC) is ZF2. Positions 2564 to 2656 (SAYYSVIEVK…MVEKKLITTA (93 aa)) are Y2. Residues 2564 to 2840 (SAYYSVIEVK…LTTPFSLKGG (277 aa)) are coV-Y. The interval 2657 to 2739 (NTGLSVSRTM…KSVMAAVNAG (83 aa)) is Y3. The interval 2740–2840 (VEVTDESCNN…LTTPFSLKGG (101 aa)) is Y4. Transmembrane regions (helical) follow at residues 2846-2866 (VLQW…ALMP), 3099-3119 (AFDL…FFAL), 3121-3141 (ASSV…YYLI), 3153-3173 (VVVI…VFQV), 3180-3200 (LYAC…SVVM), and 3205-3225 (LVMY…AVVV). The HD2 stretch occupies residues 2846–3225 (VLQWLFVANL…FCITYVAVVV (380 aa)). Residues 3239 to 3336 (IGTDVRSDGT…TASVTTSFLQ (98 aa)) form the Nsp4C domain. A Peptidase C30 domain is found at 3337 to 3639 (SGIVKMVSPT…YQQLAGVKLQ (303 aa)). Residues H3377 and C3481 each act as for 3CL-PRO activity in the active site. The next 7 membrane-spanning stretches (helical) occupy residues 3648–3668 (GTCC…SAFV), 3678–3698 (THML…MLLI), 3705–3725 (LTMY…LVVG), 3748–3768 (TYMD…FVTM), 3775–3795 (VFST…WYFG), 3802–3822 (VLLF…LSLA), and 3846–3866 (LVLL…GVLS). The tract at residues 3648 to 3866 (GTCCWILAST…VCCCYWGVLS (219 aa)) is HD3. In terms of domain architecture, RdRp Nsp7 cofactor spans 3928-4016 (SRLTDVKCAN…DYVRDNTVLQ (89 aa)). Residues 4017-4213 (ALQSEFVNMA…HNEVSTVVLQ (197 aa)) form the RdRp Nsp8 cofactor domain. In terms of domain architecture, Nsp9 ssRNA-binding spans 4214-4323 (NNELMPQKLR…GTLSSTVRLQ (110 aa)). Residues 4324–4461 (AGTATEYASN…CVGTGSQFQS (138 aa)) enclose the ExoN/MTase coactivator domain. Residues C4397, C4400, H4406, C4413, C4439, C4442, C4450, and C4452 each contribute to the Zn(2+) site. 2 zinc fingers span residues 4397–4413 (CIYC…DGLC) and 4439–4452 (CQVC…SCSC). Residues 4466 to 4721 (FLNRVRGTSV…DSELFVNGTY (256 aa)) form the NiRAN domain. Mn(2+)-binding residues include N4669 and D4678. Residues 4722-4820 (REFDLVQYDF…MNMDVDTHRY (99 aa)) form the Nsp12 Interface domain. Positions 4751, 4757, 4762, 4766, and 4943 each coordinate Zn(2+). Residues 4821–5388 (RLSLKDLLLY…NMYLRSAVMQ (568 aa)) form the Nsp12 RNA-dependent RNA polymerase domain. Positions 4823 to 5037 (SLKDLLLYAA…HQKCLKSIAA (215 aa)) are rdRp Fingers N-ter. The tract at residues 5038–5076 (TRGVPVVIGTTKFYGGWDDMLRRLIKDVDSPVLMGWDYP) is rdRp Palm N-ter. The RdRp catalytic domain occupies 5068–5230 (PVLMGWDYPK…CYNSEFASKG (163 aa)). A rdRp Fingers C-ter region spans residues 5077–5135 (KCDRAMPNILRIVSSLVLARKHDSCCSHTDRFYRLANECAQVLGEIVMCGGCYYVKPGG). H5098, C5101, and C5102 together coordinate Zn(2+). The rdRp Palm C-ter stretch occupies residues 5136–5271 (TSSGDATTAF…EKGPHEFCSQ (136 aa)). Active-site residues include S5215, D5216, and D5217. The rdRp Thumb stretch occupies residues 5272 to 5388 (HTMLVKMDGD…NMYLRSAVMQ (117 aa)). A CV ZBD domain is found at 5389–5501 (SVGACVVCSS…EDFNKIASCK (113 aa)). C5393, C5396, C5404, C5407, C5414, C5417, H5421, H5427, C5438, C5443, C5460, and H5463 together coordinate Zn(2+). A (+)RNA virus helicase ATP-binding domain is found at 5644–5825 (SVPETFQNNV…MCCLGPDIFL (182 aa)). 5669-5676 (GPPGTGKS) serves as a coordination point for ATP. The (+)RNA virus helicase C-terminal domain maps to 5826–6003 (GTCYRCPKEI…FKDCSKSYVG (178 aa)). An ExoN domain is found at 6057–6272 (LFITRDEAIK…RCLAVHDCFC (216 aa)). Active-site residues include D6075, E6077, and E6176. Zn(2+)-binding residues include C6192, C6195, C6211, H6214, H6242, C6246, and H6249. Residues H6253 and D6258 contribute to the active site. C6264 lines the Zn(2+) pocket. The N7-MTase domain maps to 6281–6507 (YPIISNEVSV…NLWNTFTRLQ (227 aa)). 6316-6322 (DIGNPKG) provides a ligand contact to S-adenosyl-L-methionine. A gpppA-binding region spans residues 6394–6408 (CNGGSLYVNKHAFHT). Residues C6432, C6453, C6464, and H6467 each coordinate Zn(2+). The region spanning 6508 to 6568 (SLENVVYNLV…NVAVELFAER (61 aa)) is the Nsp15 N-terminal oligomerization domain. Positions 6569–6689 (SIRPHPELKL…FAMRRDGDDV (121 aa)) constitute an AV-Nsp11N/CoV-Nsp15M domain. The 140-residue stretch at 6739–6878 (SPRSEMEKDF…NEEKVMTFYP (140 aa)) folds into the NendoU domain. Positions 6883–7177 (AADWKPGYVM…KEVFVGDSLV (295 aa)) constitute a Nidovirus-type SAM-dependent 2'-O-MTase domain. Active-site residues include K6927, D7011, K7051, and E7084.

Belongs to the coronaviruses polyprotein 1ab family. In terms of assembly, interacts with host PHB and PHB2. Interacts with papain-like protease nsp3 and non-structural protein 6. As to quaternary structure, monomer. Homodimer. Only the homodimer shows catalytic activity. In terms of assembly, interacts with nsp8 and nsp12 to form the replication-transcription complex (RTC): nsp12, nsp7, two subunits of nsp8, and up to two subunits of nsp13. Interacts with nsp7, nsp13 and nsp12 to form the replication-transcription complex (RTC): nsp12, nsp7, two subunits of nsp8, and up to two subunits of nsp13. As to quaternary structure, interacts with nsp12. In terms of assembly, interacts with proofreading exoribonuclease nsp14 and 2'-O-methyltransferase nsp16; these interactions enhance nsp14 and nsp16 enzymatic activities. Interacts with nsp7 and nsp8 to form the replication-transcription complex (RTC): nsp12, nsp7, two subunits of nsp8, and up to two subunits of nsp13. Interacts with nsp9. As to quaternary structure, interacts with nsp8 to form the replication-transcription complex (RTC): nsp12, nsp7, two subunits of nsp8, and up to two subunits of nsp13. It depends on Mn(2+) as a cofactor. The cofactor is Mg(2+). Post-translationally, specific enzymatic cleavages in vivo by its own proteases yield mature proteins. 3CL-PRO and PL-PRO proteinases are autocatalytically processed.

The protein resides in the host membrane. The protein localises to the host cytoplasm. It is found in the host perinuclear region. It localises to the host endoplasmic reticulum-Golgi intermediate compartment. It carries out the reaction RNA(n) + a ribonucleoside 5'-triphosphate = RNA(n+1) + diphosphate. It catalyses the reaction ATP + H2O = ADP + phosphate + H(+). The catalysed reaction is Thiol-dependent hydrolysis of ester, thioester, amide, peptide and isopeptide bonds formed by the C-terminal Gly of ubiquitin (a 76-residue protein attached to proteins as an intracellular targeting signal).. The enzyme catalyses a 5'-end (N(7)-methyl 5'-triphosphoguanosine)-ribonucleoside in mRNA + S-adenosyl-L-methionine = a 5'-end (N(7)-methyl 5'-triphosphoguanosine)-(2'-O-methyl-ribonucleoside) in mRNA + S-adenosyl-L-homocysteine + H(+). It carries out the reaction uridylyl-uridylyl-ribonucleotide-RNA = a 3'-end uridylyl-2',3'-cyclophospho-uridine-RNA + a 5'-end dephospho-ribonucleoside-RNA. It catalyses the reaction a 5'-end diphospho-ribonucleoside in mRNA + GTP + H(+) = a 5'-end (5'-triphosphoguanosine)-ribonucleoside in mRNA + diphosphate. The catalysed reaction is a 5'-end (5'-triphosphoguanosine)-ribonucleoside in mRNA + S-adenosyl-L-methionine = a 5'-end (N(7)-methyl 5'-triphosphoguanosine)-ribonucleoside in mRNA + S-adenosyl-L-homocysteine. The replicase polyprotein of coronaviruses is a multifunctional protein: it contains the activities necessary for the transcription of negative stranded RNA, leader RNA, subgenomic mRNAs and progeny virion RNA as well as proteinases responsible for the cleavage of the polyprotein into functional products. Functionally, inhibits host translation by interacting with the 40S ribosomal subunit. The nsp1-40S ribosome complex further induces an endonucleolytic cleavage near the 5'UTR of host mRNAs, targeting them for degradation. Viral mRNAs are not susceptible to nsp1-mediated endonucleolytic RNA cleavage thanks to the presence of a 5'-end leader sequence and are therefore protected from degradation. By suppressing host gene expression, nsp1 facilitates efficient viral gene expression in infected cells and evasion from host immune response. In terms of biological role, may play a role in the modulation of host cell survival signaling pathway by interacting with host PHB and PHB2. Indeed, these two proteins play a role in maintaining the functional integrity of the mitochondria and protecting cells from various stresses. Its function is as follows. Responsible for the cleavages located at the N-terminus of the replicase polyprotein. In addition, PL-PRO possesses a deubiquitinating/deISGylating activity and processes both 'Lys-48'- and 'Lys-63'-linked polyubiquitin chains from cellular substrates. Participates together with nsp4 in the assembly of virally-induced cytoplasmic double-membrane vesicles necessary for viral replication. Antagonizes innate immune induction of type I interferon by blocking the phosphorylation, dimerization and subsequent nuclear translocation of host IRF3. Also prevents host NF-kappa-B signaling. Participates in the assembly of virally-induced cytoplasmic double-membrane vesicles necessary for viral replication. Functionally, cleaves the C-terminus of replicase polyprotein at 11 sites. Recognizes substrates containing the core sequence [ILMVF]-Q-|-[SGACN]. Also able to bind an ADP-ribose-1''-phosphate (ADRP). In terms of biological role, plays a role in the initial induction of autophagosomes from host endoplasmic reticulum. Later, limits the expansion of these phagosomes that are no longer able to deliver viral components to lysosomes. Its function is as follows. Forms a hexadecamer with nsp8 (8 subunits of each) that may participate in viral replication by acting as a primase. Alternatively, may synthesize substantially longer products than oligonucleotide primers. Forms a hexadecamer with nsp7 (8 subunits of each) that may participate in viral replication by acting as a primase. Alternatively, may synthesize substantially longer products than oligonucleotide primers. Functionally, forms a primer, NSP9-pU, which is utilized by the polymerase for the initiation of RNA chains. Interacts with ribosome signal recognition particle RNA (SRP). Together with NSP8, suppress protein integration into the cell membrane, thereby disrupting host immune defenses. In terms of biological role, plays a pivotal role in viral transcription by stimulating both nsp14 3'-5' exoribonuclease and nsp16 2'-O-methyltransferase activities. Therefore plays an essential role in viral mRNAs cap methylation. Its function is as follows. RNA-directed RNA polymerase that catalyzes the transcription of viral genomic and subgenomic RNAs. Acts in complex with nsp7 and nsp8 to transcribe both the minus and positive strands of genomic RNA. The kinase-like NiRAN domain of NSP12 attaches one or more nucleotides to the amino terminus of NSP9, forming a covalent RNA-protein intermediate that serves as transcription/replication primer. Subgenomic RNAs (sgRNAs) are formed by discontinuous transcription: The polymerase has the ability to pause at transcription-regulating sequences (TRS) and jump to the leader TRS, resulting in a major deletion. This creates a series of subgenomic RNAs that are replicated, transcribed and translated. In addition, Nsp12 is a subunit of the viral RNA capping enzyme that catalyzes the RNA guanylyltransferase reaction for genomic and sub-genomic RNAs. Subsequently, the NiRAN domain transfers RNA to GDP, and forms the core cap structure GpppA-RNA. Multi-functional protein with a zinc-binding domain in N-terminus displaying RNA and DNA duplex-unwinding activities with 5' to 3' polarity. Activity of helicase is dependent on magnesium. Functionally, plays a role in viral RNA synthesis through two distinct activities. The N7-guanine methyltransferase activity plays a role in the formation of the cap structure GpppA-RNA. The proofreading exoribonuclease reduces the sensitivity of the virus to RNA mutagens during replication. This activity acts on both ssRNA and dsRNA in a 3'-5' direction. In terms of biological role, plays a role in viral transcription/replication and prevents the simultaneous activation of host cell dsRNA sensors, such as MDA5/IFIH1, OAS, and PKR. Acts by degrading the 5'-polyuridines generated during replication of the poly(A) region of viral genomic and subgenomic RNAs. Catalyzes a two-step reaction in which a 2'3'-cyclic phosphate (2'3'-cP) is first generated by 2'-O transesterification, which is then hydrolyzed to a 3'-phosphate (3'-P). If not degraded, poly(U) RNA would hybridize with poly(A) RNA tails and activate host dsRNA sensors. Its function is as follows. 2'-O-methyltransferase: Methyltransferase that mediates mRNA cap 2'-O-ribose methylation to the 5'-cap structure of viral mRNAs. N7-methyl guanosine cap is a prerequisite for binding of nsp16. Therefore plays an essential role in viral mRNAs cap methylation which is essential to evade immune system. The protein is Replicase polyprotein 1ab (rep) of Mus musculus (Mouse).